The sequence spans 505 residues: Cytochrome P450 71A2 (505 aa).

The helical transmembrane segment at 7–27 (WYSLLIPLFVFIFLLIHHCFF) threads the bilayer. A heme-binding site is contributed by C448.

The protein belongs to the cytochrome P450 family. Heme is required as a cofactor.

It localises to the membrane. May have a role in maturation, such as during flavor formation or other metabolite production specific to aging tissues. This chain is Cytochrome P450 71A2 (CYP71A2), found in Solanum melongena (Eggplant).